The primary structure comprises 189 residues: TATA-box-binding protein 1 (189 aa).

Repeat copies occupy residues 10-86 (IENV…FDKL) and 101-179 (VQNI…ISRL).

This sequence belongs to the TBP family.

Functionally, general factor that plays a role in the activation of archaeal genes transcribed by RNA polymerase. Binds specifically to the TATA box promoter element which lies close to the position of transcription initiation. The chain is TATA-box-binding protein 1 (tbp1) from Haloferax volcanii (strain ATCC 29605 / DSM 3757 / JCM 8879 / NBRC 14742 / NCIMB 2012 / VKM B-1768 / DS2) (Halobacterium volcanii).